Reading from the N-terminus, the 664-residue chain is Armadillo repeat protein involved in nucleocytoplasmic transport Syo2 (664 aa).

The ARM repeat unit spans residues 77-119; sequence GLVSKLIDRISDDSVEVVVEATGALRNLAIEEGYSICMDMYRK.

The protein belongs to the nuclear import and ribosome assembly adapter family. Forms a heterotrimeric complex with rpl5 and rpl11a or rpl11b; interaction of this complex with kap104 allows the nuclear import of the heterotrimer. Component of a hexameric 5S RNP precursor complex; this complex acts as a precursor for ribosome assembly.

It is found in the cytoplasm. The protein localises to the nucleus. Nuclear import adapter that specifically recruits the two functionally and topologically linked ribosomal proteins rpl5 and rpl11 (encoded by rpl11a and rpl11b). Guarantees that this cargo pair remains bound together from the time of synthesis in the cytoplasm until delivery to the nascent 5S rRNA in the nucleus. The protein is Armadillo repeat protein involved in nucleocytoplasmic transport Syo2 of Schizosaccharomyces pombe (strain 972 / ATCC 24843) (Fission yeast).